The sequence spans 330 residues: tRNA U34 carboxymethyltransferase (330 aa).

Residues Lys91, Trp105, Lys110, Gly130, Asp152 to Ser154, Ile181 to Glu182, Met196, Tyr200, and Arg315 contribute to the carboxy-S-adenosyl-L-methionine site.

It belongs to the class I-like SAM-binding methyltransferase superfamily. CmoB family. As to quaternary structure, homotetramer.

It carries out the reaction carboxy-S-adenosyl-L-methionine + 5-hydroxyuridine(34) in tRNA = 5-carboxymethoxyuridine(34) in tRNA + S-adenosyl-L-homocysteine + H(+). Catalyzes carboxymethyl transfer from carboxy-S-adenosyl-L-methionine (Cx-SAM) to 5-hydroxyuridine (ho5U) to form 5-carboxymethoxyuridine (cmo5U) at position 34 in tRNAs. This chain is tRNA U34 carboxymethyltransferase, found in Shewanella oneidensis (strain ATCC 700550 / JCM 31522 / CIP 106686 / LMG 19005 / NCIMB 14063 / MR-1).